Here is a 328-residue protein sequence, read N- to C-terminus: MSEEKETIKERSSGFISVRDIPGVGSSIADKLEAAGYLSAWSIVVARAEELAERTGLPVLTVQKIIENARKMLGITFKTAREVKQERLNIGKITTGSKSLDELLGGGVETKTITEFFGEYGSGKTQICHQLSVNVQLTPEKGGLNGRAVYIDTEGTFRWERIEAMARALGLDPDKVMDNIYYMRAYNSDHQIAIVDELFTFVPKNDVRLVILDSVTSHFRAEYPGREHLAERQQKLNSHLHQLMRLAEAYNVAVVVTNQVMARPDVFYGDPTTAVGGHVLAHTPGVRIQLRKSKGNKRIARVVDAPHLPEGEVVFVITEEGIRDSEEE.

Residue 118 to 125 coordinates ATP; it reads GEYGSGKT.

The protein belongs to the eukaryotic RecA-like protein family.

Involved in DNA repair and in homologous recombination. Binds and assemble on single-stranded DNA to form a nucleoprotein filament. Hydrolyzes ATP in a ssDNA-dependent manner and promotes DNA strand exchange between homologous DNA molecules. The sequence is that of DNA repair and recombination protein RadA from Desulfurococcus amylolyticus (strain DSM 18924 / JCM 16383 / VKM B-2413 / 1221n) (Desulfurococcus kamchatkensis).